Reading from the N-terminus, the 1012-residue chain is Formate dehydrogenase subunit alpha (1012 aa).

A signal peptide (tat-type signal) is located at residues 1–35 (MLIKRRAFLKLTAAGATLSAFGGLGVDLAPAKAQA). In terms of domain architecture, 4Fe-4S Mo/W bis-MGD-type spans 45–103 (AKQTTSVCCYCSVGCGLIVHTDKKTNRAINVEGDPDHPINEGSLCAKGASTWQLAENER). Cys-52, Cys-55, Cys-59, and Cys-89 together coordinate [4Fe-4S] cluster. Residue Sec-193 coordinates W-bis(molybdopterin guanine dinucleotide). Residue Sec-193 is a non-standard amino acid, selenocysteine. Residues Thr-393, Lys-395, Lys-398, Leu-428, and Asn-430 each contribute to the Ca(2+) site. A disulfide bond links Cys-852 and Cys-879.

It belongs to the prokaryotic molybdopterin-containing oxidoreductase family. Heterodimer of alpha (FdhA) and beta (FdhB) subunits. [4Fe-4S] cluster is required as a cofactor. It depends on W-bis(molybdopterin guanine dinucleotide) as a cofactor. The disulfide bond is likely to be broken in the active form of this enzyme. Post-translationally, predicted to be exported by the Tat system. The position of the signal peptide cleavage has been experimentally proven.

Its subcellular location is the periplasm. It carries out the reaction formate + NAD(+) = CO2 + NADH. Functionally, alpha chain of the formate dehydrogenase (FDH) catalyze the reversible two-electron oxidation of formate to carbon dioxide. FDH loses activity in the presence of air, but this activity can be restored. The alpha subunit of formate dehydrogenase forms the active site. In Megalodesulfovibrio gigas (Desulfovibrio gigas), this protein is Formate dehydrogenase subunit alpha.